We begin with the raw amino-acid sequence, 63 residues long: Cytochrome c oxidase subunit 7C, mitochondrial (63 aa).

The transit peptide at 1–16 directs the protein to the mitochondrion; the sequence is MLGHSIRRFTTSVVRR. Over 17–33 the chain is Mitochondrial matrix; the sequence is SHYEEGPGKNLPFSVEN. Residue K25 is modified to N6-acetyllysine; alternate. N6-succinyllysine; alternate is present on K25. A helical membrane pass occupies residues 34–60; sequence KWTLLVKMCLFFGSAFSVPFLIVRHQL. Topologically, residues 61–63 are mitochondrial intermembrane; the sequence is LKQ.

It belongs to the cytochrome c oxidase VIIc family. As to quaternary structure, component of the cytochrome c oxidase (complex IV, CIV), a multisubunit enzyme composed of 14 subunits. The complex is composed of a catalytic core of 3 subunits MT-CO1, MT-CO2 and MT-CO3, encoded in the mitochondrial DNA, and 11 supernumerary subunits COX4I, COX5A, COX5B, COX6A, COX6B, COX6C, COX7A, COX7B, COX7C, COX8 and NDUFA4, which are encoded in the nuclear genome. The complex exists as a monomer or a dimer and forms supercomplexes (SCs) in the inner mitochondrial membrane with NADH-ubiquinone oxidoreductase (complex I, CI) and ubiquinol-cytochrome c oxidoreductase (cytochrome b-c1 complex, complex III, CIII), resulting in different assemblies (supercomplex SCI(1)III(2)IV(1) and megacomplex MCI(2)III(2)IV(2)). Interacts with RAB5IF.

It localises to the mitochondrion inner membrane. The protein operates within energy metabolism; oxidative phosphorylation. Functionally, component of the cytochrome c oxidase, the last enzyme in the mitochondrial electron transport chain which drives oxidative phosphorylation. The respiratory chain contains 3 multisubunit complexes succinate dehydrogenase (complex II, CII), ubiquinol-cytochrome c oxidoreductase (cytochrome b-c1 complex, complex III, CIII) and cytochrome c oxidase (complex IV, CIV), that cooperate to transfer electrons derived from NADH and succinate to molecular oxygen, creating an electrochemical gradient over the inner membrane that drives transmembrane transport and the ATP synthase. Cytochrome c oxidase is the component of the respiratory chain that catalyzes the reduction of oxygen to water. Electrons originating from reduced cytochrome c in the intermembrane space (IMS) are transferred via the dinuclear copper A center (CU(A)) of subunit 2 and heme A of subunit 1 to the active site in subunit 1, a binuclear center (BNC) formed by heme A3 and copper B (CU(B)). The BNC reduces molecular oxygen to 2 water molecules using 4 electrons from cytochrome c in the IMS and 4 protons from the mitochondrial matrix. This Macaca fascicularis (Crab-eating macaque) protein is Cytochrome c oxidase subunit 7C, mitochondrial (COX7C).